The sequence spans 60 residues: Cytochrome c oxidase subunit 9, mitochondrial (60 aa).

The Mitochondrial matrix segment spans residues 1–18; sequence MSAIAPITGSLKKRIMKD. The helical transmembrane segment at 19–37 threads the bilayer; sequence IAVGMGLGTVLGSYWWWGF. The Mitochondrial intermembrane portion of the chain corresponds to 38-57; it reads HKPKIAARENYYTQLAEQKA. Positions 58 to 60 are cleaved as a propeptide — removed in mature form; the sequence is AEE.

Belongs to the fungal cytochrome c oxidase subunit 7a family. In terms of assembly, component of the cytochrome c oxidase (complex IV, CIV), a multisubunit enzyme composed of a catalytic core of 3 subunits and several supernumerary subunits. The complex exists as a monomer or a dimer and forms supercomplexes (SCs) in the inner mitochondrial membrane with ubiquinol-cytochrome c oxidoreductase (cytochrome b-c1 complex, complex III, CIII).

Its subcellular location is the mitochondrion inner membrane. It functions in the pathway energy metabolism; oxidative phosphorylation. Component of the cytochrome c oxidase, the last enzyme in the mitochondrial electron transport chain which drives oxidative phosphorylation. The respiratory chain contains 3 multisubunit complexes succinate dehydrogenase (complex II, CII), ubiquinol-cytochrome c oxidoreductase (cytochrome b-c1 complex, complex III, CIII) and cytochrome c oxidase (complex IV, CIV), that cooperate to transfer electrons derived from NADH and succinate to molecular oxygen, creating an electrochemical gradient over the inner membrane that drives transmembrane transport and the ATP synthase. Cytochrome c oxidase is the component of the respiratory chain that catalyzes the reduction of oxygen to water. Electrons originating from reduced cytochrome c in the intermembrane space (IMS) are transferred via the dinuclear copper A center (CU(A)) of subunit 2 and heme A of subunit 1 to the active site in subunit 1, a binuclear center (BNC) formed by heme A3 and copper B (CU(B)). The BNC reduces molecular oxygen to 2 water molecules using 4 electrons from cytochrome c in the IMS and 4 protons from the mitochondrial matrix. The polypeptide is Cytochrome c oxidase subunit 9, mitochondrial (COX9) (Eremothecium gossypii (strain ATCC 10895 / CBS 109.51 / FGSC 9923 / NRRL Y-1056) (Yeast)).